The primary structure comprises 162 residues: Interleukin-15 (162 aa).

The first 29 residues, 1–29, serve as a signal peptide directing secretion; it reads MKILKPYMRNTSISCYLCFLLNSHFLTEA. A propeptide spanning residues 30 to 48 is cleaved from the precursor; sequence GIHVFILGCVSVGLPKTEA. 2 disulfides stabilise this stretch: Cys-83-Cys-133 and Cys-90-Cys-136. Residues Asn-104, Asn-108, and Asn-119 are each glycosylated (N-linked (GlcNAc...) asparagine).

Belongs to the IL-15/IL-21 family.

The protein resides in the secreted. Its function is as follows. Cytokine that plays a major role in the development of inflammatory and protective immune responses to microbial invaders and parasites by modulating immune cells of both the innate and adaptive immune systems. Stimulates the proliferation and activation of natural killer cells, T-cells and B-cells and promotes the secretion of several cytokines. In monocytes, induces the production of IL8 and monocyte chemotactic protein 1/CCL2, two chemokines that attract neutrophils and monocytes respectively to sites of infection. Unlike most cytokines, which are secreted in soluble form, IL15 is expressed in association with its high affinity IL15RA on the surface of IL15-producing cells and delivers signals to target cells that express IL2RB and IL2RG receptor subunits. Binding to its receptor triggers the phosphorylation of JAK1 and JAK3 and the recruitment and subsequent phosphorylation of signal transducer and activator of transcription-3/STAT3 and STAT5. In mast cells, induces the rapid tyrosine phosphorylation of STAT6 and thereby controls mast cell survival and release of cytokines such as IL4. In Mus musculus (Mouse), this protein is Interleukin-15 (Il15).